The sequence spans 184 residues: MINIPTSILCRLGARSAISRSFGTSVVTKSEAKTPIQKFGWEYLKKQRDMKRPIAPHLTIYQPQLTWMLSGFHRISGCVMAGTLLVGGLGFAVLPLDFTTFVEYIRGWNLPCAVTAVFKYIIAFPIIFHTLNGIRFLGFDLAKGVDNIGQVYKSGWLVFGVSAVIALAIVINSCQNKSKAVKTA.

Residues Leu-65–Leu-94 form a helical membrane-spanning segment. Over Pro-95 to Val-114 the chain is Mitochondrial intermembrane. The helical transmembrane segment at Thr-115–Phe-139 threads the bilayer. His-129 is a heme binding site. Residues Asp-140 to Asn-147 are Mitochondrial matrix-facing. Residues Ile-148–Ile-169 form a helical membrane-spanning segment. The Mitochondrial intermembrane portion of the chain corresponds to Val-170–Asn-172.

This sequence belongs to the cytochrome b560 family. As to quaternary structure, component of complex II composed of four subunits: a flavoprotein (FP), iron-sulfur protein (IP), and a cytochrome b560 composed of two transmembrane proteins. It depends on heme as a cofactor.

It is found in the mitochondrion inner membrane. It participates in carbohydrate metabolism; tricarboxylic acid cycle. In terms of biological role, membrane-anchoring subunit of succinate dehydrogenase (SDH) that is involved in complex II of the mitochondrial electron transport chain and is responsible for transferring electrons from succinate to ubiquinone (coenzyme Q). Mediates resistance to enteropathogenic E.coli infection. The sequence is that of Succinate dehydrogenase cytochrome b560 subunit, mitochondrial (mev-1) from Caenorhabditis briggsae.